Consider the following 500-residue polypeptide: E3 ubiquitin-protein ligase TRIM69 (500 aa).

A disordered region spans residues 1–22 (MEVSSRPPSNFDPGNYVEMSDP). The necessary for nuclear localization stretch occupies residues 1–153 (MEVSSRPPSN…SMGQSKDFLQ (153 aa)). The RING-type zinc-finger motif lies at 42 to 83 (CPLCNDWFRDPLMLTCGHNFCQDCIQSFWKVHSKETFCPDCK). A coiled-coil region spans residues 217–256 (NKEKDILNDLRDEGKLLNEEMEVNLNQIQEQCLVAKDMLA). One can recognise a B30.2/SPRY domain in the interval 306–500 (PIQYIIWKEM…KEPLHIVHPQ (195 aa)). Serine 342 bears the Phosphoserine mark.

Belongs to the TRIM/RBCC family. As to quaternary structure, homo-multimer; required for antiviral activity. Interacts with PML. In terms of processing, phosphorylated. Phosphorylation is necessary for nuclear localization. As to expression, expressed in spermatid.

It is found in the cytoplasm. It localises to the nucleus. Its subcellular location is the nucleus speckle. The protein localises to the cytoskeleton. The protein resides in the microtubule organizing center. It is found in the centrosome. The enzyme catalyses S-ubiquitinyl-[E2 ubiquitin-conjugating enzyme]-L-cysteine + [acceptor protein]-L-lysine = [E2 ubiquitin-conjugating enzyme]-L-cysteine + N(6)-ubiquitinyl-[acceptor protein]-L-lysine.. Its pathway is protein modification; protein ubiquitination. In terms of biological role, E3 ubiquitin ligase that plays an important role in antiviral immunity by restricting different viral infections including dengue virus or vesicular stomatitis indiana virus. Ubiquitinates viral proteins such as dengue virus NS3 thereby limiting infection. In addition, acts as a key mediator of type I interferon induced microtubule stabilization by directly associating to microtubules independently of its E3 ligase activity. Also plays a role in cataract formation together with TP53. Mechanistically, inhibits UVB-induced cell apoptosis and reactive oxygen species (ROS) production by inducing TP53 ubiquitination. Regulates centrosome dynamics and mitotic progression by ubiquitinating STK3/MST2; leading to its redistribution to the perinuclear cytoskeleton and subsequent phosphorylation by PLK1. This Mus musculus (Mouse) protein is E3 ubiquitin-protein ligase TRIM69 (Trim69).